We begin with the raw amino-acid sequence, 815 residues long: Glycogen phosphorylase (815 aa).

The residue at position 662 (lysine 662) is an N6-(pyridoxal phosphate)lysine.

The protein belongs to the glycogen phosphorylase family. The cofactor is pyridoxal 5'-phosphate.

The enzyme catalyses [(1-&gt;4)-alpha-D-glucosyl](n) + phosphate = [(1-&gt;4)-alpha-D-glucosyl](n-1) + alpha-D-glucose 1-phosphate. In terms of biological role, phosphorylase is an important allosteric enzyme in carbohydrate metabolism. Enzymes from different sources differ in their regulatory mechanisms and in their natural substrates. However, all known phosphorylases share catalytic and structural properties. The polypeptide is Glycogen phosphorylase (glgP) (Shigella flexneri).